The following is a 378-amino-acid chain: C-C chemokine receptor type 7 (378 aa).

The N-terminal stretch at 1 to 24 (MDPGKPRKNVLVVALLVIFQVCFC) is a signal peptide. Residues 25-59 (QDEVTDDYIGENTTVDYTLYESVCFKKDVRNFKAW) lie on the Extracellular side of the membrane. A glycan (N-linked (GlcNAc...) asparagine) is linked at Asn-36. The helical transmembrane segment at 60–86 (FLPLMYSVICFVGLLGNGLVILTYIYF) threads the bilayer. At 87–95 (KRLKTMTDT) the chain is on the cytoplasmic side. The helical transmembrane segment at 96-116 (YLLNLAVADILFLLILPFWAY) threads the bilayer. Residues 117–130 (SEAKSWIFGVYLCK) are Extracellular-facing. Cys-129 and Cys-210 are disulfide-bonded. The helical transmembrane segment at 131–152 (GIFGIYKLSFFSGMLLLLCISI) threads the bilayer. Over 153–170 (DRYVAIVQAVSAHRHRAR) the chain is Cytoplasmic. The helical transmembrane segment at 171–191 (VLLISKLSCVGIWMLALFLSI) threads the bilayer. Over 192-219 (PELLYSGLQKNSGEDTLRCSLVSAQVEA) the chain is Extracellular. A helical transmembrane segment spans residues 220-247 (LITIQVAQMVFGFLVPMLAMSFCYLIII). At 248–263 (RTLLQARNFERNKAIK) the chain is on the cytoplasmic side. The chain crosses the membrane as a helical span at residues 264-289 (VIIAVVVVFIVFQLPYNGVVLAQTVA). Residues 290–313 (NFNITNSSCETSKQLNIAYDVTYS) lie on the Extracellular side of the membrane. The chain crosses the membrane as a helical span at residues 314 to 331 (LASVRCCVNPFLYAFIGV). Residues 332–378 (KFRSDLFKLFKDLGCLSQERLRHWSSCRHVRNASVSMEAETTTTFSP) lie on the Cytoplasmic side of the membrane.

This sequence belongs to the G-protein coupled receptor 1 family.

The protein localises to the cell membrane. Functionally, receptor for the MIP-3-beta chemokine. The polypeptide is C-C chemokine receptor type 7 (Ccr7) (Mus musculus (Mouse)).